The chain runs to 137 residues: MTYHLDVVSAEKKMFSGVVQKIQVTGSEGELGIFPGHAPLLTAIKPGMIRIVKQFGEEEFIYLSGGILEVQPSVVIVLADTAIRGLDLDEARALESKRKAEAHINNSHGDVDYAQASAELAKAIAKLRVIELTKKAM.

It belongs to the ATPase epsilon chain family. F-type ATPases have 2 components, CF(1) - the catalytic core - and CF(0) - the membrane proton channel. CF(1) has five subunits: alpha(3), beta(3), gamma(1), delta(1), epsilon(1). CF(0) has three main subunits: a, b and c.

Its subcellular location is the cell inner membrane. Functionally, produces ATP from ADP in the presence of a proton gradient across the membrane. The protein is ATP synthase epsilon chain of Yersinia pestis bv. Antiqua (strain Antiqua).